The following is a 184-amino-acid chain: Peptidyl-tRNA hydrolase (184 aa).

Residue Tyr14 coordinates tRNA. Catalysis depends on His19, which acts as the Proton acceptor. The tRNA site is built by Phe60 and Asn62.

Belongs to the PTH family. As to quaternary structure, monomer.

The protein resides in the cytoplasm. The catalysed reaction is an N-acyl-L-alpha-aminoacyl-tRNA + H2O = an N-acyl-L-amino acid + a tRNA + H(+). Functionally, hydrolyzes ribosome-free peptidyl-tRNAs (with 1 or more amino acids incorporated), which drop off the ribosome during protein synthesis, or as a result of ribosome stalling. Catalyzes the release of premature peptidyl moieties from peptidyl-tRNA molecules trapped in stalled 50S ribosomal subunits, and thus maintains levels of free tRNAs and 50S ribosomes. In Mesomycoplasma hyopneumoniae (strain 232) (Mycoplasma hyopneumoniae), this protein is Peptidyl-tRNA hydrolase.